Here is a 199-residue protein sequence, read N- to C-terminus: MFQRFTSLFFSTPAPPEDSNCPGAFVSEEDEVDGWLIIDLQDSYTAPPDPRASPAPAGRPPPAPSLMDESWFVTPPACFTAEGPGLGPARLQSNPLEDLLIEHPSMSVYVTGSTIVLESGPPSPHPEAALPDQDLSDGELAPARREPRALHHAAAPMPARAVLLEKAGQVRRLQRARQRAERHTLSAKVLQRQNRARES.

The short motif at 26–41 (VSEEDEVDGWLIIDLQ) is the LIR element. Disordered regions lie at residues 41–69 (QDSYTAPPDPRASPAPAGRPPPAPSLMDE), 117–153 (LESGPPSPHPEAALPDQDLSDGELAPARREPRALHHA), and 173–199 (LQRARQRAERHTLSAKVLQRQNRARES). Residues 47 to 64 (PPDPRASPAPAGRPPPAP) show a composition bias toward pro residues. S136 carries the post-translational modification Phosphoserine.

In terms of assembly, interacts with VMP1, GABARAP, GABARAPL1, GABARAPL2, MAP1LC3A, MAP1LC3B, MAP1LC3C and THRA. Abundantly expressed in skeletal muscle and heart and expression is highly repressed in muscle from obese diabetic rats.

It localises to the cytoplasm. The protein resides in the cytosol. It is found in the nucleus. The protein localises to the PML body. Its subcellular location is the cytoplasmic vesicle. It localises to the autophagosome. Functionally, dual regulator of transcription and autophagy. Positively regulates autophagy and is required for autophagosome formation and processing. May act as a scaffold protein that recruits MAP1LC3A, GABARAP and GABARAPL2 and brings them to the autophagosome membrane by interacting with VMP1 where, in cooperation with the BECN1-PI3-kinase class III complex, they trigger autophagosome development. Acts as a transcriptional activator of THRA. This chain is Tumor protein p53-inducible nuclear protein 2 (Tp53inp2), found in Rattus norvegicus (Rat).